The following is a 322-amino-acid chain: Ribose-phosphate pyrophosphokinase 1 (322 aa).

Residues 39–41 (DGE) and 98–99 (RQ) contribute to the ATP site. Mg(2+) contacts are provided by histidine 132 and aspartate 173. Lysine 196 is a catalytic residue. Residues arginine 198, aspartate 224, and 228 to 232 (DTAGT) contribute to the D-ribose 5-phosphate site.

It belongs to the ribose-phosphate pyrophosphokinase family. Class I subfamily. In terms of assembly, homohexamer. Mg(2+) is required as a cofactor.

Its subcellular location is the cytoplasm. The catalysed reaction is D-ribose 5-phosphate + ATP = 5-phospho-alpha-D-ribose 1-diphosphate + AMP + H(+). Its pathway is metabolic intermediate biosynthesis; 5-phospho-alpha-D-ribose 1-diphosphate biosynthesis; 5-phospho-alpha-D-ribose 1-diphosphate from D-ribose 5-phosphate (route I): step 1/1. Its function is as follows. Involved in the biosynthesis of the central metabolite phospho-alpha-D-ribosyl-1-pyrophosphate (PRPP) via the transfer of pyrophosphoryl group from ATP to 1-hydroxyl of ribose-5-phosphate (Rib-5-P). This chain is Ribose-phosphate pyrophosphokinase 1, found in Streptococcus mutans serotype c (strain ATCC 700610 / UA159).